Reading from the N-terminus, the 414-residue chain is Isocitrate dehydrogenase [NADP] cytoplasmic (414 aa).

Residue Ser2 is modified to N-acetylserine. Tyr42 carries the phosphotyrosine modification. 75–77 (TIT) lines the NADP(+) pocket. Thr77 contributes to the substrate binding site. At Lys81 the chain carries N6-acetyllysine. An NADP(+)-binding site is contributed by Arg82. Substrate contacts are provided by residues 94-100 (SPNGTIR) and Arg109. At Lys126 the chain carries N6-succinyllysine. Positions 132 and 212 each coordinate substrate. An N6-acetyllysine mark is found at Lys224, Lys233, and Lys243. Residue Asp252 participates in Mn(2+) binding. Lys260 is a binding site for NADP(+). The Mn(2+) site is built by Asp275 and Asp279. 310–315 (GTVTRH) is an NADP(+) binding site. Lys321 carries the post-translational modification N6-acetyllysine. NADP(+) is bound at residue Asn328. At Ser389 the chain carries Phosphoserine. Lys400 carries the N6-succinyllysine modification.

The protein belongs to the isocitrate and isopropylmalate dehydrogenases family. As to quaternary structure, homodimer. Mg(2+) serves as cofactor. It depends on Mn(2+) as a cofactor. Post-translationally, acetylation at Lys-374 dramatically reduces catalytic activity.

Its subcellular location is the cytoplasm. The protein resides in the cytosol. The enzyme catalyses D-threo-isocitrate + NADP(+) = 2-oxoglutarate + CO2 + NADPH. Its function is as follows. Catalyzes the NADP(+)-dependent oxidative decarboxylation of isocitrate (D-threo-isocitrate) to 2-ketoglutarate (2-oxoglutarate), which is required by other enzymes such as the phytanoyl-CoA dioxygenase. Plays a critical role in the generation of NADPH, an important cofactor in many biosynthesis pathways. May act as a corneal epithelial crystallin and may be involved in maintaining corneal epithelial transparency. The sequence is that of Isocitrate dehydrogenase [NADP] cytoplasmic (IDH1) from Pongo abelii (Sumatran orangutan).